Here is a 116-residue protein sequence, read N- to C-terminus: MRHRCRVHKLGKPADQRKALLRSLSTQLIRHGRVTTTKARAKAVRSQVEKMITLAKDGSLASRRQALGYIYDKQLVHALFDQVADRYGDRNGGYTRIIRTIRRRGDNAEMAIIELT.

It belongs to the bacterial ribosomal protein bL17 family. As to quaternary structure, part of the 50S ribosomal subunit. Contacts protein L32.

The chain is Large ribosomal subunit protein bL17 from Acaryochloris marina (strain MBIC 11017).